A 324-amino-acid chain; its full sequence is Taste receptor type 2 member 116 (324 aa).

Topologically, residues 1 to 2 (MN) are extracellular. The chain crosses the membrane as a helical span at residues 3 to 23 (GVLYITFTVILSVEVIIGNFG). Topologically, residues 24 to 55 (NGIIALVNIMDLAKRRKISSVDQILTALAISR) are cytoplasmic. A helical membrane pass occupies residues 56–76 (IVLLWLVLVSWWLSMFYPGQW). The Extracellular segment spans residues 77 to 94 (MTEGIDVIVHNVWTTLNQ). A helical transmembrane segment spans residues 95-115 (ISLWLATSFSVFCFLKVANFS). At 116–128 (NTIFFYLKIRVKK) the chain is on the cytoplasmic side. The helical transmembrane segment at 129 to 149 (VMTGTLIMFLLLLGLNIIVIN) threads the bilayer. Over 150–183 (ASKTILIPEYKVNMSNSLNLKNTQISMLFPFANT) the chain is Extracellular. N-linked (GlcNAc...) asparagine glycosylation occurs at Asn162. Residues 184 to 204 (LFGFIPFAVSLVTFLLLFFSL) form a helical membrane-spanning segment. Over 205 to 236 (WKHQRKMHHGAQGCRDSSTKAHIRVLQTLIAS) the chain is Cytoplasmic. The chain crosses the membrane as a helical span at residues 237–257 (ILLYFVFFLSLVVKVWISLFL). Over 258-261 (ERML) the chain is Extracellular. A helical membrane pass occupies residues 262 to 282 (LLLITQAAKIAFPSLHPWVLI). Residues 283–324 (LGNAKLRKASLSALQWLRCRHKDEHRRVQRPEVHSCGSSCMP) are Cytoplasmic-facing.

It belongs to the G-protein coupled receptor T2R family.

It localises to the membrane. In terms of biological role, putative taste receptor which may play a role in the perception of bitterness. The sequence is that of Taste receptor type 2 member 116 from Rattus norvegicus (Rat).